Consider the following 284-residue polypeptide: Acetylglutamate kinase (284 aa).

Substrate is bound by residues 54 to 55, arginine 76, and asparagine 179; that span reads GG.

It belongs to the acetylglutamate kinase family. ArgB subfamily.

It localises to the cytoplasm. It catalyses the reaction N-acetyl-L-glutamate + ATP = N-acetyl-L-glutamyl 5-phosphate + ADP. Its pathway is amino-acid biosynthesis; L-arginine biosynthesis; N(2)-acetyl-L-ornithine from L-glutamate: step 2/4. Functionally, catalyzes the ATP-dependent phosphorylation of N-acetyl-L-glutamate. In Sorangium cellulosum (strain So ce56) (Polyangium cellulosum (strain So ce56)), this protein is Acetylglutamate kinase.